The sequence spans 368 residues: Mitogen-activated protein kinase HOG1B (368 aa).

The Protein kinase domain maps to 20 to 299; the sequence is YVNLEPVGMG…ASQALAHPYL (280 aa). ATP-binding positions include 26 to 34 and Lys49; that span reads VGMGAFGLV. The active-site Proton acceptor is Asp141. The residue at position 171 (Thr171) is a Phosphothreonine. The short motif at 171–173 is the TXY element; it reads TGY. Residue Tyr173 is modified to Phosphotyrosine.

This sequence belongs to the protein kinase superfamily. Ser/Thr protein kinase family. MAP kinase subfamily. HOG1 sub-subfamily. Mg(2+) serves as cofactor. In terms of processing, phosphorylated. Dually phosphorylated on Thr-171 and Tyr-173, which activates the enzyme. Rapidly dephosphorylated upon either hypo- or hyperosmotic shock.

It is found in the cytoplasm. The protein resides in the nucleus. It catalyses the reaction L-seryl-[protein] + ATP = O-phospho-L-seryl-[protein] + ADP + H(+). The enzyme catalyses L-threonyl-[protein] + ATP = O-phospho-L-threonyl-[protein] + ADP + H(+). Activated by tyrosine and threonine phosphorylation. Functionally, mitogen-activated protein kinase involved in a signal transduction pathway that is activated by changes in the osmolarity of the extracellular environment. Controls osmotic regulation of transcription of target genes. The protein is Mitogen-activated protein kinase HOG1B (HOG1B) of Wallemia ichthyophaga (strain EXF-994 / CBS 113033).